Consider the following 76-residue polypeptide: Acyl carrier protein (76 aa).

The Carrier domain occupies 1–76; that stretch reads MSIEERVKKI…SAIDYVQNNQ (76 aa). The residue at position 36 (serine 36) is an O-(pantetheine 4'-phosphoryl)serine.

It belongs to the acyl carrier protein (ACP) family. Post-translationally, 4'-phosphopantetheine is transferred from CoA to a specific serine of apo-ACP by AcpS. This modification is essential for activity because fatty acids are bound in thioester linkage to the sulfhydryl of the prosthetic group.

It localises to the cytoplasm. It functions in the pathway lipid metabolism; fatty acid biosynthesis. Functionally, carrier of the growing fatty acid chain in fatty acid biosynthesis. This Histophilus somni (strain 129Pt) (Haemophilus somnus) protein is Acyl carrier protein.